Here is a 361-residue protein sequence, read N- to C-terminus: UPF0283 membrane protein Smed_1530 (361 aa).

Positions Met1–Asp40 are disordered. Positions Ala22–Pro31 are enriched in basic and acidic residues. 2 helical membrane-spanning segments follow: residues Phe76–Val96 and Trp109–Val129.

It belongs to the UPF0283 family.

The protein localises to the cell inner membrane. This Sinorhizobium medicae (strain WSM419) (Ensifer medicae) protein is UPF0283 membrane protein Smed_1530.